The sequence spans 648 residues: Probable potassium transport system protein Kup 1 (648 aa).

12 consecutive transmembrane segments (helical) span residues 25–45, 57–77, 113–133, 153–173, 184–204, 219–239, 263–283, 312–332, 362–382, 391–411, 417–437, and 446–466; these read LTLG…IYAF, IVAG…ILVV, LVMA…VITP, SVSR…LFLM, LFGP…LIHI, GVLF…AVFL, WLAI…AFAL, IPLV…VITG, IYLP…VLGF, AYGV…FLVV, WGWP…LFFF, and EGGW…VTWV.

The protein belongs to the HAK/KUP transporter (TC 2.A.72) family.

It localises to the cell inner membrane. The enzyme catalyses K(+)(in) + H(+)(in) = K(+)(out) + H(+)(out). Transport of potassium into the cell. Likely operates as a K(+):H(+) symporter. The protein is Probable potassium transport system protein Kup 1 of Rhizorhabdus wittichii (strain DSM 6014 / CCUG 31198 / JCM 15750 / NBRC 105917 / EY 4224 / RW1) (Sphingomonas wittichii).